A 318-amino-acid chain; its full sequence is MMIKLGIVMDPISSINIKKDSSFAMMLEAQRRGWEIHYMEMNDLHLDQGVAIADTKVVQLKEDPNGWYEFTSEQTIELSELDAVLMRKDPPFDTEYIYATYILERAEEQGTLIVNKPQSLRDCNEKLFTAWFPELTPTTIVTRKAEKIKAFRQEHGDIILKPLDGMGGASIFRVKENDPNVSVIIETLTNHGQNYAMAQTFVPDISNGDKRILVVDGEPMPYCLARIPAKGETRGNLAAGGSGEPRPLSETDLKIANAVAPTLKEKGLIFVGLDVIGDKLTEINVTSPTCIREIEAAFDISITGKLMDAIERRLQAQA.

Residues 125 to 311 (EKLFTAWFPE…ITGKLMDAIE (187 aa)) enclose the ATP-grasp domain. ATP is bound at residue 151–208 (FRQEHGDIILKPLDGMGGASIFRVKENDPNVSVIIETLTNHGQNYAMAQTFVPDISNG). The Mg(2+) site is built by glutamate 282 and asparagine 284.

The protein belongs to the prokaryotic GSH synthase family. The cofactor is Mg(2+). Requires Mn(2+) as cofactor.

It carries out the reaction gamma-L-glutamyl-L-cysteine + glycine + ATP = glutathione + ADP + phosphate + H(+). The protein operates within sulfur metabolism; glutathione biosynthesis; glutathione from L-cysteine and L-glutamate: step 2/2. The sequence is that of Glutathione synthetase from Vibrio vulnificus (strain YJ016).